A 122-amino-acid chain; its full sequence is Large ribosomal subunit protein uL18 (122 aa).

This sequence belongs to the universal ribosomal protein uL18 family. Part of the 50S ribosomal subunit; part of the 5S rRNA/L5/L18/L25 subcomplex. Contacts the 5S and 23S rRNAs.

Its function is as follows. This is one of the proteins that bind and probably mediate the attachment of the 5S RNA into the large ribosomal subunit, where it forms part of the central protuberance. The protein is Large ribosomal subunit protein uL18 of Kosmotoga olearia (strain ATCC BAA-1733 / DSM 21960 / TBF 19.5.1).